The following is a 334-amino-acid chain: ADP-L-glycero-D-manno-heptose-6-epimerase (334 aa).

Residues 11–12, 32–33, lysine 39, lysine 54, 77–81, and asparagine 94 each bind NADP(+); these read FI, DN, and QGACS. Catalysis depends on tyrosine 141, which acts as the Proton acceptor. NADP(+) is bound at residue lysine 145. Position 171 (asparagine 171) interacts with substrate. NADP(+) contacts are provided by valine 172 and lysine 180. Lysine 180 functions as the Proton acceptor in the catalytic mechanism. Substrate is bound by residues arginine 182, histidine 189, 203–206, arginine 216, and tyrosine 295; that span reads FGSN.

The protein belongs to the NAD(P)-dependent epimerase/dehydratase family. HldD subfamily. As to quaternary structure, homopentamer. NADP(+) is required as a cofactor.

It catalyses the reaction ADP-D-glycero-beta-D-manno-heptose = ADP-L-glycero-beta-D-manno-heptose. It functions in the pathway nucleotide-sugar biosynthesis; ADP-L-glycero-beta-D-manno-heptose biosynthesis; ADP-L-glycero-beta-D-manno-heptose from D-glycero-beta-D-manno-heptose 7-phosphate: step 4/4. Functionally, catalyzes the interconversion between ADP-D-glycero-beta-D-manno-heptose and ADP-L-glycero-beta-D-manno-heptose via an epimerization at carbon 6 of the heptose. This is ADP-L-glycero-D-manno-heptose-6-epimerase from Neisseria meningitidis serogroup C (strain 053442).